Here is a 427-residue protein sequence, read N- to C-terminus: Serine hydroxymethyltransferase (427 aa).

Residues Leu-122 and 126-128 each bind (6S)-5,6,7,8-tetrahydrofolate; that span reads GHL. Lys-231 carries the post-translational modification N6-(pyridoxal phosphate)lysine. 355–357 lines the (6S)-5,6,7,8-tetrahydrofolate pocket; the sequence is SPF.

The protein belongs to the SHMT family. In terms of assembly, homodimer. The cofactor is pyridoxal 5'-phosphate.

Its subcellular location is the cytoplasm. It catalyses the reaction (6R)-5,10-methylene-5,6,7,8-tetrahydrofolate + glycine + H2O = (6S)-5,6,7,8-tetrahydrofolate + L-serine. The protein operates within one-carbon metabolism; tetrahydrofolate interconversion. Its pathway is amino-acid biosynthesis; glycine biosynthesis; glycine from L-serine: step 1/1. In terms of biological role, catalyzes the reversible interconversion of serine and glycine with tetrahydrofolate (THF) serving as the one-carbon carrier. This reaction serves as the major source of one-carbon groups required for the biosynthesis of purines, thymidylate, methionine, and other important biomolecules. Also exhibits THF-independent aldolase activity toward beta-hydroxyamino acids, producing glycine and aldehydes, via a retro-aldol mechanism. The protein is Serine hydroxymethyltransferase of Nostoc sp. (strain PCC 7120 / SAG 25.82 / UTEX 2576).